The primary structure comprises 276 residues: Urease accessory protein UreD (276 aa).

This sequence belongs to the UreD family. In terms of assembly, ureD, UreF and UreG form a complex that acts as a GTP-hydrolysis-dependent molecular chaperone, activating the urease apoprotein by helping to assemble the nickel containing metallocenter of UreC. The UreE protein probably delivers the nickel.

The protein resides in the cytoplasm. Its function is as follows. Required for maturation of urease via the functional incorporation of the urease nickel metallocenter. The protein is Urease accessory protein UreD of Polaromonas naphthalenivorans (strain CJ2).